The sequence spans 320 residues: Ribosomal RNA small subunit methyltransferase H (320 aa).

Residues glycine 36–histidine 38, aspartate 56, phenylalanine 82, aspartate 103, and glutamine 110 each bind S-adenosyl-L-methionine.

The protein belongs to the methyltransferase superfamily. RsmH family.

The protein resides in the cytoplasm. The enzyme catalyses cytidine(1402) in 16S rRNA + S-adenosyl-L-methionine = N(4)-methylcytidine(1402) in 16S rRNA + S-adenosyl-L-homocysteine + H(+). Specifically methylates the N4 position of cytidine in position 1402 (C1402) of 16S rRNA. The sequence is that of Ribosomal RNA small subunit methyltransferase H from Chromobacterium violaceum (strain ATCC 12472 / DSM 30191 / JCM 1249 / CCUG 213 / NBRC 12614 / NCIMB 9131 / NCTC 9757 / MK).